Here is a 261-residue protein sequence, read N- to C-terminus: tRNA pseudouridine synthase A (261 aa).

Aspartate 51 serves as the catalytic Nucleophile. Tyrosine 109 is a substrate binding site.

It belongs to the tRNA pseudouridine synthase TruA family. In terms of assembly, homodimer.

It carries out the reaction uridine(38/39/40) in tRNA = pseudouridine(38/39/40) in tRNA. Formation of pseudouridine at positions 38, 39 and 40 in the anticodon stem and loop of transfer RNAs. The protein is tRNA pseudouridine synthase A of Shewanella sp. (strain MR-4).